A 275-amino-acid polypeptide reads, in one-letter code: ATP synthase subunit delta (275 aa).

This sequence belongs to the ATPase delta chain family. As to quaternary structure, F-type ATPases have 2 components, F(1) - the catalytic core - and F(0) - the membrane proton channel. F(1) has five subunits: alpha(3), beta(3), gamma(1), delta(1), epsilon(1). F(0) has three main subunits: a(1), b(2) and c(10-14). The alpha and beta chains form an alternating ring which encloses part of the gamma chain. F(1) is attached to F(0) by a central stalk formed by the gamma and epsilon chains, while a peripheral stalk is formed by the delta and b chains.

The protein resides in the cell membrane. Its function is as follows. F(1)F(0) ATP synthase produces ATP from ADP in the presence of a proton or sodium gradient. F-type ATPases consist of two structural domains, F(1) containing the extramembraneous catalytic core and F(0) containing the membrane proton channel, linked together by a central stalk and a peripheral stalk. During catalysis, ATP synthesis in the catalytic domain of F(1) is coupled via a rotary mechanism of the central stalk subunits to proton translocation. This protein is part of the stalk that links CF(0) to CF(1). It either transmits conformational changes from CF(0) to CF(1) or is implicated in proton conduction. In Arthrobacter sp. (strain FB24), this protein is ATP synthase subunit delta.